The sequence spans 496 residues: Tripartite motif-containing protein 30A (496 aa).

Residues cysteine 15–arginine 59 form an RING-type zinc finger. A B box-type zinc finger spans residues glutamine 91–isoleucine 132. Zn(2+) contacts are provided by cysteine 96, histidine 99, cysteine 118, and histidine 124. Residues asparagine 173–histidine 239 are a coiled coil. Residues lysine 205–glutamate 210 form a highly hydrophilic region. Positions threonine 268 to threonine 276 match the Nuclear localization signal motif. Positions aspartate 281–serine 496 constitute a B30.2/SPRY domain.

As to quaternary structure, homomultimer. Interacts with NR2C2/TAK1, TAB2 and TAB3. Does not interact with NLRP3, NLRC4 or TAB1. Highly expressed in spleen and lymph nodes (at protein level).

The protein resides in the cytoplasm. It localises to the nucleus. In terms of biological role, trans-acting factor that regulates gene expression of interleukin 2 receptor alpha chain. May affect IL2R-alpha expression through cis-acting negative regulatory elements or through competition with proteins that bind to enhancer or activator sequences. Negatively regulates Toll-like receptor (TLR)-mediated activation of NFKB by promoting degradation of TAB2 and TAB3 and preventing TRAF6 autoubiquitination. Negatively regulates production of reactive oxygen species (ROS) which inhibits activation of the NLRP3 inflammasome complex. This, in turn, regulates activation of CASP1 and subsequent cleavage of IL1B and IL18. No activity detected against a range of retroviruses including a number of lentiviruses, gammaretroviruses and betaretroviruses. This is Tripartite motif-containing protein 30A (Trim30a) from Mus musculus (Mouse).